The primary structure comprises 221 residues: Carotenogenesis protein CarR (221 aa).

Helical transmembrane passes span 56–76, 79–99, 107–127, 136–156, 166–186, and 191–211; these read LGLL…PLLL, APLL…ALSP, LGVG…GAPH, VCTV…LFAL, AVVA…LACE, and HVLS…VVIS.

The protein resides in the cell inner membrane. Negative regulator of the carotenoid synthesis regulon. It is probably inactivated by protoporphyrin IX in the presence of blue light. Inactivation of CarR leads to loss of negative control over the carotenogenesis protein CarQ. The chain is Carotenogenesis protein CarR (carR) from Myxococcus xanthus.